The chain runs to 426 residues: Glutamate-1-semialdehyde 2,1-aminomutase (426 aa).

An N6-(pyridoxal phosphate)lysine modification is found at Lys265.

It belongs to the class-III pyridoxal-phosphate-dependent aminotransferase family. HemL subfamily. Homodimer. Pyridoxal 5'-phosphate serves as cofactor.

The protein resides in the cytoplasm. It catalyses the reaction (S)-4-amino-5-oxopentanoate = 5-aminolevulinate. It participates in porphyrin-containing compound metabolism; protoporphyrin-IX biosynthesis; 5-aminolevulinate from L-glutamyl-tRNA(Glu): step 2/2. This chain is Glutamate-1-semialdehyde 2,1-aminomutase, found in Hahella chejuensis (strain KCTC 2396).